The chain runs to 330 residues: Carbonic anhydrase 1 (330 aa).

The interval 1 to 109 (MSTASAFAIN…AAARIDQITA (109 aa)) is chloroplast transit peptide-like.

It belongs to the beta-class carbonic anhydrase family. Homohexamer.

Its subcellular location is the cytoplasm. It carries out the reaction hydrogencarbonate + H(+) = CO2 + H2O. Its function is as follows. Reversible hydration of carbon dioxide. This chain is Carbonic anhydrase 1, found in Flaveria linearis (Narrowleaf yellowtops).